We begin with the raw amino-acid sequence, 183 residues long: Ribosome-recycling factor (183 aa).

The protein belongs to the RRF family.

It is found in the cytoplasm. Responsible for the release of ribosomes from messenger RNA at the termination of protein biosynthesis. May increase the efficiency of translation by recycling ribosomes from one round of translation to another. This chain is Ribosome-recycling factor, found in Buchnera aphidicola subsp. Baizongia pistaciae (strain Bp).